The primary structure comprises 835 residues: Disease resistance protein RPP13 (835 aa).

Residues 25–41 adopt a coiled-coil conformation; that stretch reads MAVKEDLEELKTELTCI. The 310-residue stretch at 144-453 folds into the NB-ARC domain; it reads SSLRVRQLRR…AEGFIQGDEE (310 aa). 192–199 contributes to the ATP binding site; the sequence is GMGGLGKT.

Belongs to the disease resistance NB-LRR family. RPP13 subfamily.

Functionally, disease resistance protein. Resistance proteins guard the plant against pathogens that contain an appropriate avirulence protein via an indirect interaction with this avirulence protein. That triggers a defense system including the hypersensitive response, which restricts the pathogen growth. In contrast to other resistance proteins, it works independently of ESD1 and NSD1 proteins and does not require the accumulation of salicylic acid, suggesting the existence of an independent signaling pathway. The specificity to avirulence proteins differs in the different cultivars. This Arabidopsis thaliana (Mouse-ear cress) protein is Disease resistance protein RPP13 (RPP13).